A 613-amino-acid polypeptide reads, in one-letter code: Cilia- and flagella-associated protein 100 (613 aa).

Residues 36-55 are disordered; that stretch reads KSKESKKNKGNVTISDRSSN. Residues 45–55 are compositionally biased toward polar residues; it reads GNVTISDRSSN. Coiled-coil stretches lie at residues 167–198, 233–260, 396–435, and 504–580; these read ALAM…FLEK, VEIR…KHYK, FTKL…DKEV, and GTVQ…RGRK.

It belongs to the CFAP100 family.

It is found in the cytoplasm. Its subcellular location is the cytoskeleton. The protein localises to the cilium axoneme. Its function is as follows. May play a role in ciliary/flagellar motility by regulating the assembly and the activity of axonemal inner dynein arm. The protein is Cilia- and flagella-associated protein 100 of Mus musculus (Mouse).